The following is a 234-amino-acid chain: Putative gustatory receptor clone PTE38 (234 aa).

The chain crosses the membrane as a helical span at residues 1–11 (MYLFFSNLSFN). The Extracellular segment spans residues 12 to 42 (DICIITTTIPKMLMNVQSHDQSITYLGCLSQ). A disulfide bridge connects residues cysteine 39 and cysteine 121. A helical membrane pass occupies residues 43–62 (VYLIVNFGSIESCLLAVMAY). At 63 to 84 (DRYVAICHPLKYTVIMNHYFCV) the chain is on the cytoplasmic side. Residues 85-105 (MLLLFACSLALHMCLFHILMV) traverse the membrane as a helical segment. The Extracellular portion of the chain corresponds to 106–138 (LILTFCTKTEIPHFFCELAHIIKLTCSDNFINY). The chain crosses the membrane as a helical span at residues 139 to 160 (LLIYTVSVLFFGVHIVGIILSY). Over 161 to 182 (IYTVSSVLRMSLLGGMYKAFST) the chain is Cytoplasmic. Residues 183-202 (CGSHLSVVSLFYGTGFGVHI) traverse the membrane as a helical segment. Over 203 to 212 (SSPLTDSPRK) the chain is Extracellular. The helical transmembrane segment at 213 to 234 (TVVASVMYTVVTQMHGPFIYSL) threads the bilayer.

Belongs to the G-protein coupled receptor 1 family. Tongue specific.

The protein resides in the cell membrane. Functionally, possible taste receptor. The polypeptide is Putative gustatory receptor clone PTE38 (Rattus norvegicus (Rat)).